The chain runs to 375 residues: MENFPTEYFLNTSVRLLEYIRYRDSNYTREERIENLHYAYNKAAHHFAQPRQQKMLKVDPKRLQASLQTIVGMVVYSWAKVSKECMADLSIHYTYTLVLDDSSDDPHPAMVNYFDDLQAGREQAHPWWALVNEHFPNVLRHFGPFCSLNLIRSTMDFFEGCWIEQYNFGGFPGSDDYPQFLRRMNGLGHCVGASLWPKDLFDERKNFLEITTAVAQMENWMVWVNDLMSFYKEFDDERDQISLVKNFVTCHEITLDEALEKLTQETLHSSKQMVAVFADKDPQVMDTIECFMHGYVTWHLCDARYRLHEIYEKVKDQDTEDAKKFCKFFEQAANVGAVAASEWAYPPVAQLASVRAKSDVKEAQKPFLSSIELVE.

Belongs to the trichodiene synthase family.

The enzyme catalyses (2E,6E)-farnesyl diphosphate = trichodiene + diphosphate. Its pathway is sesquiterpene biosynthesis; trichothecene biosynthesis. Its function is as follows. TS is a member of the terpene cyclase group of enzymes. It catalyzes the isomerization and cyclization of farnesyl pyro-phosphate to form trichodiene, the first cyclic intermediate in the biosynthetic pathway for trichothecenes. It serves to branch trichothecene biosynthesis from the isoprenoid pathway. This is Trichodiene synthase (TRI5) from Fusarium cortaderiae.